A 468-amino-acid chain; its full sequence is FAD-linked oxidoreductase hasG (468 aa).

In terms of domain architecture, FAD-binding PCMH-type spans L37–W211.

This sequence belongs to the oxygen-dependent FAD-linked oxidoreductase family. The cofactor is FAD.

The protein operates within secondary metabolite biosynthesis. Functionally, FAD-linked oxidoreductase; part of the gene cluster that mediates the biosynthesis of hexadehydro-astechrome (HAS), a tryptophan-derived iron(III)-complex that acts as a virulence factor in infected mice. Within the pathway, hasG converts the prenyl to a methylbutadienyl side chain. The HAS biosynthesis begins with the synthesis of a tethered Trp-Ala dipeptide by the NRPS hasD. The 7-dimethylallyltryptophan synthase hasE then catalyzes the prenylation of the hasD-tethered tryptophan or the resulting tethered Trp-Ala dipeptide at the C-7 position of the indole moiety. HAS biosynthesis continues via tethered intermediates with the succesive actions of the cytochrome P450 monooxygenase hasH, the O-methyltransferase hasC, and the FAD-linked oxidoreductase hasG. The resulting O-methylated diketopiperazine is then released from hasD. Finally, three O-methylated diketopiperazine molecules assemble in a trimeric complex with Fe(III) to produce hexadehydro-astechrome. The polypeptide is FAD-linked oxidoreductase hasG (Aspergillus fumigatus (strain CBS 144.89 / FGSC A1163 / CEA10) (Neosartorya fumigata)).